Consider the following 142-residue polypeptide: Large-conductance mechanosensitive channel (142 aa).

The next 3 helical transmembrane spans lie at 10–30, 40–60, and 86–106; these read FAVK…GAFG, LIMP…LFIV, and GNFI…FVMV.

This sequence belongs to the MscL family. Homopentamer.

The protein localises to the cell inner membrane. Its function is as follows. Channel that opens in response to stretch forces in the membrane lipid bilayer. May participate in the regulation of osmotic pressure changes within the cell. The sequence is that of Large-conductance mechanosensitive channel from Acidovorax ebreus (strain TPSY) (Diaphorobacter sp. (strain TPSY)).